We begin with the raw amino-acid sequence, 377 residues long: Citrate synthase (377 aa).

Residues histidine 258 and aspartate 313 contribute to the active site.

The protein belongs to the citrate synthase family. In terms of assembly, homodimer. The N-terminus is blocked by acetylation.

It catalyses the reaction oxaloacetate + acetyl-CoA + H2O = citrate + CoA + H(+). It functions in the pathway carbohydrate metabolism; tricarboxylic acid cycle; isocitrate from oxaloacetate: step 1/2. With respect to regulation, allosterically inhibited by NADH. The polypeptide is Citrate synthase (gltA) (Saccharolobus solfataricus (strain ATCC 35092 / DSM 1617 / JCM 11322 / P2) (Sulfolobus solfataricus)).